Consider the following 524-residue polypeptide: Serine/threonine-protein kinase PAK 2 (524 aa).

A disordered region spans residues 1 to 81 (MSDNGELEDK…PEISPPSDFE (81 aa)). N-acetylserine is present on serine 2. Phosphoserine occurs at positions 2, 20, 55, and 58. The residue at position 60 (threonine 60) is a Phosphothreonine. Lysine 62 carries the N6-acetyllysine modification. Serine 64 is subject to Phosphoserine. Residues 67–81 (KEKERPEISPPSDFE) show a composition bias toward basic and acidic residues. The segment at 69-112 (KERPEISPPSDFEHTIHVGFDAVTGEFTGMPEQWARLLQTSNIT) is GTPase-binding. Positions 69-137 (KERPEISPPS…KFYDSNTVKQ (69 aa)) are autoregulatory region. Residues 74-87 (ISPPSDFEHTIHVG) enclose the CRIB domain. The segment at 88–248 (FDAVTGEFTG…IVSIGDPKKK (161 aa)) is linker. Lysine 128 carries the N6-acetyllysine modification. Threonine 134 carries the phosphothreonine modification. At tyrosine 139 the chain carries Phosphotyrosine. Serine 141 carries the post-translational modification Phosphoserine. Phosphothreonine is present on threonine 143. A Phosphoserine modification is found at serine 152. Threonine 159 and threonine 169 each carry phosphothreonine. The segment covering 169 to 178 (TEEDDDDEEA) has biased composition (acidic residues). Positions 169-188 (TEEDDDDEEAAPPVIAPRPD) are disordered. Phosphoserine is present on serine 197. A disordered region spans residues 204–228 (APVGDSHVDSGAKSSDKQKKKTKMT). Over residues 209–228 (SHVDSGAKSSDKQKKKTKMT) the composition is skewed to basic and acidic residues. The Nuclear localization signal signature appears at 245-251 (PKKKYTR). The 252-residue stretch at 249–500 (YTRYEKIGQG…AKELLQHPFL (252 aa)) folds into the Protein kinase domain. ATP contacts are provided by residues 255 to 263 (IGQGASGTV) and lysine 278. The active-site Proton acceptor is the aspartate 368. Residue threonine 402 is modified to Phosphothreonine; by autocatalysis.

As to quaternary structure, interacts tightly with GTP-bound but not GDP-bound CDC42/p21 and RAC1. Interacts with SH3MD4. Interacts with SCRIB. Interacts with ARHGEF7 and GIT1. PAK-2p34 interacts with ARHGAP10. Interacts with RAC1. Post-translationally, full-length PAK2 is autophosphorylated when activated by CDC42/p21. Following cleavage, both peptides, PAK-2p27 and PAK-2p34, become highly autophosphorylated. Autophosphorylation of PAK-2p27 can occur in the absence of any effectors and is dependent on phosphorylation of Thr-402, because PAK-2p27 is acting as an exogenous substrate. During apoptosis proteolytically cleaved by caspase-3 or caspase-3-like proteases to yield active PAK-2p34. In terms of processing, ubiquitinated, leading to its proteasomal degradation.

It is found in the cytoplasm. Its subcellular location is the nucleus. The protein localises to the perinuclear region. The protein resides in the membrane. It catalyses the reaction L-seryl-[protein] + ATP = O-phospho-L-seryl-[protein] + ADP + H(+). The enzyme catalyses L-threonyl-[protein] + ATP = O-phospho-L-threonyl-[protein] + ADP + H(+). With respect to regulation, activated by binding small G proteins. Binding of GTP-bound CDC42 or RAC1 to the autoregulatory region releases monomers from the autoinhibited dimer, enables phosphorylation of Thr-402 and allows the kinase domain to adopt an active structure. Following caspase cleavage, autophosphorylated PAK-2p34 is constitutively active. Its function is as follows. Serine/threonine protein kinase that plays a role in a variety of different signaling pathways including cytoskeleton regulation, cell motility, cell cycle progression, apoptosis or proliferation. Acts as a downstream effector of the small GTPases CDC42 and RAC1. Activation by the binding of active CDC42 and RAC1 results in a conformational change and a subsequent autophosphorylation on several serine and/or threonine residues. Full-length PAK2 stimulates cell survival and cell growth. Phosphorylates MAPK4 and MAPK6 and activates the downstream target MAPKAPK5, a regulator of F-actin polymerization and cell migration. Phosphorylates JUN and plays an important role in EGF-induced cell proliferation. Phosphorylates many other substrates including histone H4 to promote assembly of H3.3 and H4 into nucleosomes, BAD, ribosomal protein S6, or MBP. Phosphorylates CASP7, thereby preventing its activity. Additionally, associates with ARHGEF7 and GIT1 to perform kinase-independent functions such as spindle orientation control during mitosis. On the other hand, apoptotic stimuli such as DNA damage lead to caspase-mediated cleavage of PAK2, generating PAK-2p34, an active p34 fragment that translocates to the nucleus and promotes cellular apoptosis involving the JNK signaling pathway. Caspase-activated PAK2 phosphorylates MKNK1 and reduces cellular translation. In Oryctolagus cuniculus (Rabbit), this protein is Serine/threonine-protein kinase PAK 2 (PAK2).